The sequence spans 353 residues: Photosystem II protein D1 (353 aa).

An N-acetylthreonine modification is found at threonine 2. The residue at position 2 (threonine 2) is a Phosphothreonine. 3 consecutive transmembrane segments (helical) span residues 29-46 (YIGWFGVLMIPTLLTATS), 118-133 (HFLLGVACYMGREWEL), and 142-156 (WIAVAYSAPVAAATA). A chlorophyll a-binding site is contributed by histidine 118. Tyrosine 126 contributes to the pheophytin a binding site. [CaMn4O5] cluster contacts are provided by aspartate 170 and glutamate 189. The chain crosses the membrane as a helical span at residues 197–218 (FHMLGVAGVFGGSLFSAMHGSL). Histidine 198 contacts chlorophyll a. A quinone is bound by residues histidine 215 and 264–265 (SF). Histidine 215 contributes to the Fe cation binding site. Histidine 272 lines the Fe cation pocket. Residues 274-288 (FLAAWPVVGIWFTAL) traverse the membrane as a helical segment. 4 residues coordinate [CaMn4O5] cluster: histidine 332, glutamate 333, aspartate 342, and alanine 344. Positions 345–353 (SIEAPLVNG) are excised as a propeptide.

Belongs to the reaction center PufL/M/PsbA/D family. In terms of assembly, PSII is composed of 1 copy each of membrane proteins PsbA, PsbB, PsbC, PsbD, PsbE, PsbF, PsbH, PsbI, PsbJ, PsbK, PsbL, PsbM, PsbT, PsbX, PsbY, PsbZ, Psb30/Ycf12, at least 3 peripheral proteins of the oxygen-evolving complex and a large number of cofactors. It forms dimeric complexes. It depends on The D1/D2 heterodimer binds P680, chlorophylls that are the primary electron donor of PSII, and subsequent electron acceptors. It shares a non-heme iron and each subunit binds pheophytin, quinone, additional chlorophylls, carotenoids and lipids. D1 provides most of the ligands for the Mn4-Ca-O5 cluster of the oxygen-evolving complex (OEC). There is also a Cl(-1) ion associated with D1 and D2, which is required for oxygen evolution. The PSII complex binds additional chlorophylls, carotenoids and specific lipids. as a cofactor. Post-translationally, tyr-161 forms a radical intermediate that is referred to as redox-active TyrZ, YZ or Y-Z. C-terminally processed by CTPA; processing is essential to allow assembly of the oxygen-evolving complex and thus photosynthetic growth.

Its subcellular location is the plastid. The protein resides in the chloroplast thylakoid membrane. It catalyses the reaction 2 a plastoquinone + 4 hnu + 2 H2O = 2 a plastoquinol + O2. Functionally, photosystem II (PSII) is a light-driven water:plastoquinone oxidoreductase that uses light energy to abstract electrons from H(2)O, generating O(2) and a proton gradient subsequently used for ATP formation. It consists of a core antenna complex that captures photons, and an electron transfer chain that converts photonic excitation into a charge separation. The D1/D2 (PsbA/PsbD) reaction center heterodimer binds P680, the primary electron donor of PSII as well as several subsequent electron acceptors. The chain is Photosystem II protein D1 from Psilotum nudum (Whisk fern).